The chain runs to 148 residues: Putative pre-16S rRNA nuclease (148 aa).

This sequence belongs to the YqgF nuclease family.

The protein resides in the cytoplasm. Could be a nuclease involved in processing of the 5'-end of pre-16S rRNA. The polypeptide is Putative pre-16S rRNA nuclease (Chlamydia muridarum (strain MoPn / Nigg)).